We begin with the raw amino-acid sequence, 508 residues long: Tyrosine decarboxylase 4 (508 aa).

K318 carries the post-translational modification N6-(pyridoxal phosphate)lysine.

The protein belongs to the group II decarboxylase family. Homodimer. Requires pyridoxal 5'-phosphate as cofactor.

The enzyme catalyses L-tyrosine + H(+) = tyramine + CO2. The sequence is that of Tyrosine decarboxylase 4 (TYRDC-4) from Petroselinum crispum (Parsley).